A 333-amino-acid chain; its full sequence is 4-hydroxyproline epimerase (333 aa).

The active-site Proton acceptor is the Cys-90. Substrate-binding positions include 91 to 92 (GH) and Asp-249. Residue Cys-253 is the Proton donor of the active site. 254-255 (GT) serves as a coordination point for substrate.

Belongs to the proline racemase family. In terms of assembly, homodimer.

The enzyme catalyses trans-4-hydroxy-L-proline = cis-4-hydroxy-D-proline. Functionally, allows intracellular utilization of 4-hydroxyproline, one of the major constituents of host collagen, by converting 4-hydroxy-L-proline to 4-hydroxy-D-proline, which can be further metabolized by intracellular 4-hydroxy-D-proline oxidases. Strong B-cell mitogen. Plays an important role in the regulation of intra- and extracellular amino acid pools, allowing the bacterium to profit from host precursors and enzymatic pathways. The protein is 4-hydroxyproline epimerase of Brucella suis (strain ATCC 23445 / NCTC 10510).